The primary structure comprises 231 residues: Ribose-5-phosphate isomerase A (231 aa).

Substrate is bound by residues Thr28–Thr31, Asp83–Asp86, and Lys96–Gly99. The active-site Proton acceptor is the Glu105. Lys123 provides a ligand contact to substrate.

It belongs to the ribose 5-phosphate isomerase family. Homodimer.

The catalysed reaction is aldehydo-D-ribose 5-phosphate = D-ribulose 5-phosphate. The protein operates within carbohydrate degradation; pentose phosphate pathway; D-ribose 5-phosphate from D-ribulose 5-phosphate (non-oxidative stage): step 1/1. Functionally, catalyzes the reversible conversion of ribose-5-phosphate to ribulose 5-phosphate. This Agrobacterium fabrum (strain C58 / ATCC 33970) (Agrobacterium tumefaciens (strain C58)) protein is Ribose-5-phosphate isomerase A.